Reading from the N-terminus, the 31-residue chain is Cytochrome b6-f complex subunit 6 (31 aa).

The chain crosses the membrane as a helical span at residues 4–24; it reads ITSYFGFLLAALTITSALLIG.

Belongs to the PetL family. As to quaternary structure, the 4 large subunits of the cytochrome b6-f complex are cytochrome b6, subunit IV (17 kDa polypeptide, PetD), cytochrome f and the Rieske protein, while the 4 small subunits are PetG, PetL, PetM and PetN. The complex functions as a dimer.

It localises to the plastid. The protein localises to the chloroplast thylakoid membrane. Functionally, component of the cytochrome b6-f complex, which mediates electron transfer between photosystem II (PSII) and photosystem I (PSI), cyclic electron flow around PSI, and state transitions. PetL is important for photoautotrophic growth as well as for electron transfer efficiency and stability of the cytochrome b6-f complex. This Piper cenocladum (Ant piper) protein is Cytochrome b6-f complex subunit 6.